A 368-amino-acid chain; its full sequence is Aminomethyltransferase (368 aa).

This sequence belongs to the GcvT family. As to quaternary structure, the glycine cleavage system is composed of four proteins: P, T, L and H.

The catalysed reaction is N(6)-[(R)-S(8)-aminomethyldihydrolipoyl]-L-lysyl-[protein] + (6S)-5,6,7,8-tetrahydrofolate = N(6)-[(R)-dihydrolipoyl]-L-lysyl-[protein] + (6R)-5,10-methylene-5,6,7,8-tetrahydrofolate + NH4(+). In terms of biological role, the glycine cleavage system catalyzes the degradation of glycine. This chain is Aminomethyltransferase, found in Xylella fastidiosa (strain 9a5c).